Reading from the N-terminus, the 814-residue chain is Protein fam-161 (814 aa).

Over residues 71 to 87 (ITQHRSSYKVTKSSSCH) the composition is skewed to polar residues. Disordered regions lie at residues 71-130 (ITQH…SWSQ), 150-255 (RHQV…ATSA), 569-610 (SRSK…THAT), and 714-814 (MKSA…SSEA). The span at 99–111 (MPRHLDLKPRSSE) shows a compositional bias: basic and acidic residues. A compositionally biased stretch (low complexity) spans 174–193 (STAPSQVSVTSSVQSVAALS). Polar residues-rich tracts occupy residues 194-207 (GQNP…TPSH) and 216-235 (RTHQ…TLQN). Positions 236 to 249 (PRHRTSSASRHHST) are enriched in basic residues. 2 stretches are compositionally biased toward polar residues: residues 570 to 583 (RSKS…NCQE) and 594 to 610 (ENLP…THAT). Positions 606–689 (STHATQLREE…LAEMKQRVLN (84 aa)) form a coiled coil. Residues 714 to 727 (MKSAKGRGIERVQS) show a composition bias toward basic and acidic residues. Over residues 728–745 (QEKQQSIGRRSSEVSGSG) the composition is skewed to polar residues. A compositionally biased stretch (basic and acidic residues) spans 751–765 (KGYEESFESEDKSEK). 2 stretches are compositionally biased toward low complexity: residues 766-779 (SGSS…SGSE) and 795-814 (SKST…SSEA).

Belongs to the FAM161 family. As to expression, expressed in amphid and phasmid ciliated neurons.

It is found in the cell projection. Its subcellular location is the cilium. It localises to the cytoplasm. The protein resides in the cytoskeleton. The protein localises to the cilium axoneme. The chain is Protein fam-161 from Caenorhabditis elegans.